The following is a 506-amino-acid chain: ATP-dependent rRNA helicase RRP3 (506 aa).

Disordered regions lie at residues 1-22 (MSGKVDKKKGSSVKKTEGKSKE) and 37-88 (NQKK…FESF). Positions 49–69 (SDQEDDPSESEEEEGSDSEDV) are enriched in acidic residues. The Q motif signature appears at 86 to 114 (ESFSDLDLVPELIEACKNLNFAKPTPIQA). The Helicase ATP-binding domain maps to 117–289 (IPPALQGHDI…RASLTNPVKC (173 aa)). An ATP-binding site is contributed by 130 to 137 (AQTGSGKT). A DEAD box motif is present at residues 236-239 (DEAD). In terms of domain architecture, Helicase C-terminal spans 312–460 (LKNTYLIYLM…KENVNKDAIL (149 aa)). The disordered stretch occupies residues 485 to 506 (IARGKGRRGRMAARDDMDKGER). Basic and acidic residues predominate over residues 496–506 (AARDDMDKGER).

The protein belongs to the DEAD box helicase family. DDX47/RRP3 subfamily. As to quaternary structure, interacts with the SSU processome.

It is found in the nucleus. It catalyses the reaction ATP + H2O = ADP + phosphate + H(+). Its function is as follows. ATP-dependent rRNA helicase required for pre-ribosomal RNA processing. Involved in the maturation of the 35S-pre-rRNA and to its cleavage to mature 18S rRNA. This Vanderwaltozyma polyspora (strain ATCC 22028 / DSM 70294 / BCRC 21397 / CBS 2163 / NBRC 10782 / NRRL Y-8283 / UCD 57-17) (Kluyveromyces polysporus) protein is ATP-dependent rRNA helicase RRP3.